Reading from the N-terminus, the 254-residue chain is Probable pectate lyase E (254 aa).

Residues 1 to 17 form the signal peptide; that stretch reads MYQPLLLLPLLLTSAFA. An N-linked (GlcNAc...) asparagine glycan is attached at Asn-175. A disordered region spans residues 228–254; sequence DNNKKEPAKKSSGPSNACKYKEPLASC.

It belongs to the polysaccharide lyase 3 family. Ca(2+) serves as cofactor.

The protein resides in the secreted. The enzyme catalyses Eliminative cleavage of (1-&gt;4)-alpha-D-galacturonan to give oligosaccharides with 4-deoxy-alpha-D-galact-4-enuronosyl groups at their non-reducing ends.. Its function is as follows. Pectinolytic enzyme consist of four classes of enzymes: pectin lyase, polygalacturonase, pectin methylesterase and rhamnogalacturonase. Among pectinolytic enzymes, pectin lyase is the most important in depolymerization of pectin, since it cleaves internal glycosidic bonds of highly methylated pectins. Favors pectate, the anion, over pectin, the methyl ester. This Aspergillus fumigatus (strain ATCC MYA-4609 / CBS 101355 / FGSC A1100 / Af293) (Neosartorya fumigata) protein is Probable pectate lyase E (plyE).